A 588-amino-acid polypeptide reads, in one-letter code: Aspartate--tRNA ligase (588 aa).

Residue glutamate 171 participates in L-aspartate binding. Positions 195–198 are aspartate; that stretch reads QLFK. Position 217 (arginine 217) interacts with L-aspartate. ATP is bound by residues 217-219 and glutamine 226; that span reads RDE. Position 447 (histidine 447) interacts with L-aspartate. Glutamate 481 provides a ligand contact to ATP. Arginine 488 lines the L-aspartate pocket. Position 533–536 (533–536) interacts with ATP; it reads GLDR.

The protein belongs to the class-II aminoacyl-tRNA synthetase family. Type 1 subfamily. In terms of assembly, homodimer.

Its subcellular location is the cytoplasm. The catalysed reaction is tRNA(Asp) + L-aspartate + ATP = L-aspartyl-tRNA(Asp) + AMP + diphosphate. Its function is as follows. Catalyzes the attachment of L-aspartate to tRNA(Asp) in a two-step reaction: L-aspartate is first activated by ATP to form Asp-AMP and then transferred to the acceptor end of tRNA(Asp). This is Aspartate--tRNA ligase from Aeromonas salmonicida (strain A449).